Here is a 154-residue protein sequence, read N- to C-terminus: Superoxide dismutase [Cu-Zn] (154 aa).

Positions 47, 49, and 64 each coordinate Cu cation. Cysteines 58 and 147 form a disulfide. Zn(2+) contacts are provided by histidine 64, histidine 72, histidine 81, and aspartate 84. A Cu cation-binding site is contributed by histidine 121. Over residues aspartate 126–lysine 137 the composition is skewed to basic and acidic residues. Residues aspartate 126–cysteine 147 form a disordered region.

Belongs to the Cu-Zn superoxide dismutase family. Homodimer. Requires Cu cation as cofactor. It depends on Zn(2+) as a cofactor.

It localises to the cytoplasm. The catalysed reaction is 2 superoxide + 2 H(+) = H2O2 + O2. Destroys radicals which are normally produced within the cells and which are toxic to biological systems. Plays an important role in the phase transition, and may be important in vivo, as it would facilitate the intracellular survival of the fungus by providing a non-toxic environment in the macrophage phagolysosomes. The chain is Superoxide dismutase [Cu-Zn] from Talaromyces marneffei (Penicillium marneffei).